The chain runs to 307 residues: MQTIPHVPVLYREVLEQFKNIKNGIVIDCTMGYGGHTSLILDANPNIKLIAIDQDQSAIDFSTKRLEPYGDRVVIKKGRFSTIIKEILKEYDISDIRGILADIGVSSLQLDKKERGFSFFSENLDMRMDEDAPLNANIVINEYSSHELQRVLLEYGELRNYKQIASFIVSNRPFYSAKELSDALRHLMPSGKKIHPATLLMQAIRIEVNNELGELESLLDTIQERKFLDTKVAIISFHSLEDRIVKNRFNEWRASCICPQEAMRCTCTNDNSLGNILTKKPIIAQMDEIQANPRSRSAKLRVFEMKK.

Residues 34-36 (GGH), Asp-53, Leu-88, Asp-102, and Gln-109 each bind S-adenosyl-L-methionine.

This sequence belongs to the methyltransferase superfamily. RsmH family.

It localises to the cytoplasm. The catalysed reaction is cytidine(1402) in 16S rRNA + S-adenosyl-L-methionine = N(4)-methylcytidine(1402) in 16S rRNA + S-adenosyl-L-homocysteine + H(+). In terms of biological role, specifically methylates the N4 position of cytidine in position 1402 (C1402) of 16S rRNA. The protein is Ribosomal RNA small subunit methyltransferase H of Sulfurimonas denitrificans (strain ATCC 33889 / DSM 1251) (Thiomicrospira denitrificans (strain ATCC 33889 / DSM 1251)).